Consider the following 470-residue polypeptide: Serine/threonine-protein kinase-like protein At1g28390 (470 aa).

Positions 52 to 333 (FSANNFLGKG…LEVVECLKTV (282 aa)) constitute a Protein kinase domain. ATP is bound by residues 58-66 (LGKGSHGRV) and Lys81. Asp186 functions as the Proton acceptor in the catalytic mechanism. Residues Thr221 and Thr226 each carry the phosphothreonine modification. Tyr234 bears the Phosphotyrosine mark.

The protein belongs to the protein kinase superfamily. Ser/Thr protein kinase family.

It carries out the reaction L-seryl-[protein] + ATP = O-phospho-L-seryl-[protein] + ADP + H(+). It catalyses the reaction L-threonyl-[protein] + ATP = O-phospho-L-threonyl-[protein] + ADP + H(+). The chain is Serine/threonine-protein kinase-like protein At1g28390 from Arabidopsis thaliana (Mouse-ear cress).